A 646-amino-acid chain; its full sequence is Beta-mannosyltransferase 6 (646 aa).

Topologically, residues 1-25 are cytoplasmic; the sequence is MGNYKPSIKQYVVTVKAIKSSQFGR. The chain crosses the membrane as a helical span at residues 26-46; the sequence is LGICAVVLLFVLGYPFYFISN. Residues 47–646 lie on the Extracellular side of the membrane; sequence NPFDTSIRYQ…LTGGWLPSHN (600 aa). N-linked (GlcNAc...) asparagine glycosylation is found at Asn62, Asn81, Asn103, Asn117, Asn127, Asn132, Asn146, Asn334, and Asn393.

The protein belongs to the BMT family.

It localises to the membrane. Functionally, beta-mannosyltransferase involved in cell wall biosynthesis. Required for beta-1,2-mannose transfer on phospholipomannan. Required for pro-inflammatory response in macrophages through phospholipomannan-induced TNF-alpha production. The chain is Beta-mannosyltransferase 6 (BMT6) from Candida albicans (strain SC5314 / ATCC MYA-2876) (Yeast).